The chain runs to 153 residues: UPAR/Ly6 domain-containing protein cold (153 aa).

The N-terminal stretch at M1–G25 is a signal peptide. Topologically, residues L26–Q130 are extracellular. Cystine bridges form between C28–C55, C31–C41, C48–C81, C87–C112, C99–C109, and C113–C118. N33 carries an N-linked (GlcNAc...) asparagine glycan. Residue S124 is the site of GPI-anchor amidated serine attachment. The propeptide at G125 to S153 is removed in mature form. A helical transmembrane segment spans residues G131–P151. Over R152–S153 the chain is Cytoplasmic.

Belongs to the snake toxin-like superfamily. GPI-anchored. Expressed in all tissues that form septate junctions, including hindgut, trachea, epidermis and dorsal pouch. Expressed in subperineurial glial cells that form the hemolymph-brain barrier of the central nervous system.

The protein localises to the endosome membrane. The protein resides in the endoplasmic reticulum membrane. It localises to the cell membrane. It is found in the cell junction. Its subcellular location is the septate junction. Required for septate junction assembly, possibly by organizing the preassembly and transport of septate junction proteins such as dlg1/disks large 1 and Nrx-IV/Neurexin-IV. Involved in paracellular barrier functions of trachea, hindgut and salivary gland mediated by epithelial cell septate junctions. Involved in paracellular barrier functions of the hemolymph-brain barrier (insect blood-brain barrier) mediated by glial cell septate junctions. Required for maintenance of septate junctions in imaginal disk epithelial cells. Involved in the epithelial cell wound-healing response. Directly or indirectly mediates cell-cell adhesion during septate junction formation. In Drosophila melanogaster (Fruit fly), this protein is UPAR/Ly6 domain-containing protein cold.